The chain runs to 249 residues: uncharacterized protein (249 aa).

The 58-residue stretch at 7-64 (PRVHVFLAEKGVGSRRFCEELIRKKLVRVNNTIAKLGDKVTLGDRIIYKKQIFVFKDF) folds into the S4 RNA-binding domain. The active-site Nucleophile is D112.

Belongs to the pseudouridine synthase RsuA family.

It catalyses the reaction a uridine in RNA = a pseudouridine in RNA. This is an uncharacterized protein from Borreliella burgdorferi (strain ATCC 35210 / DSM 4680 / CIP 102532 / B31) (Borrelia burgdorferi).